Consider the following 199-residue polypeptide: Holliday junction branch migration complex subunit RuvA (199 aa).

Residues methionine 1–threonine 63 are domain I. Residues aspartate 64–glycine 142 are domain II. Residues alanine 143 to proline 153 form a flexible linker region. Positions proline 153–arginine 199 are domain III.

It belongs to the RuvA family. As to quaternary structure, homotetramer. Forms an RuvA(8)-RuvB(12)-Holliday junction (HJ) complex. HJ DNA is sandwiched between 2 RuvA tetramers; dsDNA enters through RuvA and exits via RuvB. An RuvB hexamer assembles on each DNA strand where it exits the tetramer. Each RuvB hexamer is contacted by two RuvA subunits (via domain III) on 2 adjacent RuvB subunits; this complex drives branch migration. In the full resolvosome a probable DNA-RuvA(4)-RuvB(12)-RuvC(2) complex forms which resolves the HJ.

It is found in the cytoplasm. The RuvA-RuvB-RuvC complex processes Holliday junction (HJ) DNA during genetic recombination and DNA repair, while the RuvA-RuvB complex plays an important role in the rescue of blocked DNA replication forks via replication fork reversal (RFR). RuvA specifically binds to HJ cruciform DNA, conferring on it an open structure. The RuvB hexamer acts as an ATP-dependent pump, pulling dsDNA into and through the RuvAB complex. HJ branch migration allows RuvC to scan DNA until it finds its consensus sequence, where it cleaves and resolves the cruciform DNA. This Mycobacterium avium (strain 104) protein is Holliday junction branch migration complex subunit RuvA.